We begin with the raw amino-acid sequence, 229 residues long: C-&gt;U-editing enzyme APOBEC-1 (229 aa).

The region spanning 10–134 (VDPTLRRRIE…PRNRQGLRDL (125 aa)) is the CMP/dCMP-type deaminase domain. Residue H61 coordinates Zn(2+). The active-site Proton donor is E63. Zn(2+) contacts are provided by C93 and C96.

Belongs to the cytidine and deoxycytidylate deaminase family. Homodimer. Interacts with A1CF; form an mRNA editing complex. Interacts with RBM47; form an mRNA editing complex. Found in a complex with CELF2/CUGBP2 and A1CF. Interacts with HNRPAB. Interacts with SYNCRIP. It depends on Zn(2+) as a cofactor. As to expression, expressed in the liver as well as small intestine.

It is found in the cytoplasm. The protein localises to the nucleus. It catalyses the reaction a cytidine in mRNA + H2O + H(+) = a uridine in mRNA + NH4(+). The enzyme catalyses cytidine(6666) in apoB mRNA + H2O + H(+) = uridine(6666) in apoB mRNA + NH4(+). Cytidine deaminase catalyzing the cytidine to uridine postranscriptional editing of a variety of mRNAs. Form complexes with cofactors that confer differential editing activity and selectivity. Responsible for the postranscriptional editing of a CAA codon for Gln to a UAA codon for stop in the apolipoprotein B mRNA. Also involved in CGA (Arg) to UGA (Stop) editing in the NF1 mRNA. May also play a role in the epigenetic regulation of gene expression by participating in DNA demethylation. The protein is C-&gt;U-editing enzyme APOBEC-1 of Rattus norvegicus (Rat).